A 296-amino-acid chain; its full sequence is Glucokinase (296 aa).

It belongs to the ROK (NagC/XylR) family. Homodimer. The cofactor is a divalent metal cation.

The catalysed reaction is D-glucose + ATP = D-glucose 6-phosphate + ADP + H(+). Its function is as follows. Catalyzes the phosphorylation of D-glucose to D-glucose 6-phosphate using ATP as the phosphate donor. Has a broad hexose specificity, and in addition to glucose, which shows the highest catalytic efficiency, it can also phosphorylate fructose, mannose, galactose and sorbitol. Can also use CTP, GTP or UTP as phosphoryl donor. This is Glucokinase from Pyrobaculum calidifontis (strain DSM 21063 / JCM 11548 / VA1).